A 449-amino-acid chain; its full sequence is N-succinylarginine dihydrolase (449 aa).

Residues glycine 19–serine 28, asparagine 110, and histidine 137–arginine 138 each bind substrate. The tract at residues tyrosine 23–arginine 43 is disordered. Residues asparagine 25–asparagine 37 show a composition bias toward polar residues. Glutamate 174 is a catalytic residue. Arginine 214 serves as a coordination point for substrate. Histidine 250 is an active-site residue. Substrate is bound by residues aspartate 252 and asparagine 365. Residue cysteine 371 is the Nucleophile of the active site.

It belongs to the succinylarginine dihydrolase family. In terms of assembly, homodimer.

It catalyses the reaction N(2)-succinyl-L-arginine + 2 H2O + 2 H(+) = N(2)-succinyl-L-ornithine + 2 NH4(+) + CO2. It participates in amino-acid degradation; L-arginine degradation via AST pathway; L-glutamate and succinate from L-arginine: step 2/5. Its function is as follows. Catalyzes the hydrolysis of N(2)-succinylarginine into N(2)-succinylornithine, ammonia and CO(2). The chain is N-succinylarginine dihydrolase from Pseudomonas putida (strain GB-1).